A 257-amino-acid chain; its full sequence is MIEFRNVSKVYPNGTKGLNNINLKIQKGEFVVMVGLSGAGKSTLLRSVNRLHEITEGEIMIEGESITAAKGKGLRRMRRDIGMIFQSFNLVKRSTVLKNVLAGRVGYHSTLRTTLGLFPKEDLELAFQSLKRVNILEKAYARADELSGGQQQRVSIARALAQEAKIILADEPVASLDPLTTKQVLEDLKKINEDFGITTIVNLHSIDLARQYATRIIGLHAGEIVFDGLVEEATDEKFAEIYGDVVQKSELLEVAVK.

The 245-residue stretch at 2-246 (IEFRNVSKVY…KFAEIYGDVV (245 aa)) folds into the ABC transporter domain. ATP is bound at residue 35–42 (GLSGAGKS).

This sequence belongs to the ABC transporter superfamily. Phosphonates importer (TC 3.A.1.9.1) family. The complex is composed of two ATP-binding proteins (PhnC), two transmembrane proteins (PhnE) and a solute-binding protein (PhnD).

The protein localises to the cell membrane. It carries out the reaction phosphonate(out) + ATP + H2O = phosphonate(in) + ADP + phosphate + H(+). In terms of biological role, part of the ABC transporter complex PhnCDE involved in phosphonates import. Responsible for energy coupling to the transport system. The sequence is that of Phosphonates import ATP-binding protein PhnC from Bacillus anthracis.